The sequence spans 413 residues: Peptidase T (413 aa).

His81 contributes to the Zn(2+) binding site. Asp83 is a catalytic residue. Residue Asp143 coordinates Zn(2+). The active-site Proton acceptor is the Glu178. 3 residues coordinate Zn(2+): Glu179, Asp201, and His383.

Belongs to the peptidase M20B family. Requires Zn(2+) as cofactor.

It localises to the cytoplasm. The enzyme catalyses Release of the N-terminal residue from a tripeptide.. Functionally, cleaves the N-terminal amino acid of tripeptides. The polypeptide is Peptidase T (Lactococcus lactis subsp. hordniae).